The following is a 111-amino-acid chain: Holo-[acyl-carrier-protein] synthase (111 aa).

Mg(2+) contacts are provided by aspartate 8 and glutamate 57.

Belongs to the P-Pant transferase superfamily. AcpS family. Requires Mg(2+) as cofactor.

The protein localises to the cytoplasm. The enzyme catalyses apo-[ACP] + CoA = holo-[ACP] + adenosine 3',5'-bisphosphate + H(+). Transfers the 4'-phosphopantetheine moiety from coenzyme A to a Ser of acyl-carrier-protein. This is Holo-[acyl-carrier-protein] synthase from Mycoplasmoides gallisepticum (strain R(low / passage 15 / clone 2)) (Mycoplasma gallisepticum).